Consider the following 918-residue polypeptide: Probable lipoxygenase 6 (918 aa).

Residues 56–76 (AASPSSGIKGGGAGERRPAPE) form a disordered region. In terms of domain architecture, PLAT spans 90 to 218 (QKEDIKEAVA…ELPTKRVFFS (129 aa)). The region spanning 221–918 (PYLPSETPPG…CRGVPNSISI (698 aa)) is the Lipoxygenase domain. Positions 573, 578, 765, 769, and 918 each coordinate Fe cation.

This sequence belongs to the lipoxygenase family. Fe cation serves as cofactor.

It catalyses the reaction (9Z,12Z)-octadecadienoate + O2 = (13S)-hydroperoxy-(9Z,11E)-octadecadienoate. The catalysed reaction is (9Z,12Z,15Z)-octadecatrienoate + O2 = (13S)-hydroperoxy-(9Z,11E,15Z)-octadecatrienoate. It participates in lipid metabolism; oxylipin biosynthesis. In terms of biological role, plant lipoxygenase may be involved in a number of diverse aspects of plant physiology including growth and development, pest resistance, and senescence or responses to wounding. Catalyzes the hydroperoxidation of lipids containing a cis,cis-1,4-pentadiene structure. This is Probable lipoxygenase 6 from Oryza sativa subsp. japonica (Rice).